Here is a 208-residue protein sequence, read N- to C-terminus: Thymidylate kinase (208 aa).

13–20 lines the ATP pocket; that stretch reads GLEGAGKS.

This sequence belongs to the thymidylate kinase family.

The catalysed reaction is dTMP + ATP = dTDP + ADP. Functionally, phosphorylation of dTMP to form dTDP in both de novo and salvage pathways of dTTP synthesis. The sequence is that of Thymidylate kinase from Shewanella amazonensis (strain ATCC BAA-1098 / SB2B).